A 211-amino-acid chain; its full sequence is MSHGHSHGGGGCRCAAEREEPPEQRGLAYGLYLRIDLERLQCLNESREGSGRGVFKPWEERTDRSKFVESDADEELLFNIPFTGNVKLKGIIIMGEDDDSHPSEMRLYKNIPQMSFDDTEREPDQTFSLNRDLTGELEYATKISRFSNVYHLSIHISKNFGADTTKVFYIGLRGEWTELRRHEVTICNYEASANPADHRVHQVTPQTHFIS.

The region spanning 20–192 (EPPEQRGLAY…EVTICNYEAS (173 aa)) is the PITH domain. Y189 carries the phosphotyrosine modification.

Belongs to the PITHD1 family. As to expression, down-regulated in primary acute myeloid leukemia (AML) patients.

The protein localises to the cytoplasm. Promotes megakaryocyte differentiation by up-regulating RUNX1 expression. Regulates RUNX1 expression by activating the proximal promoter of the RUNX1 gene and by enhancing the translation activity of an internal ribosome entry site (IRES) element in the RUNX1 gene. In Homo sapiens (Human), this protein is PITH domain-containing protein 1 (PITHD1).